The primary structure comprises 1063 residues: MSPGASRGPRGSQAPLIAPLCCAAAALGMLLWSPACQAFNLDVEKLTVYSGPKGSYFGYAVDFHIPDARTASVLVGAPKANTSQPDIVEGGAVYYCPWPAEGSAQCRQIPFDTTNNRKIRVNGTKEPIEFKSNQWFGATVKAHKGKVVACAPLYHWRTLKPTPEKDPVGTCYVAIQNFSAYAEFSPCRNSNADPEGQGYCQAGFSLDFYKNGDLIVGGPGSFYWQGQVITASVADIIANYSFKDILRKLAGEKQTEVAPASYDDSYLGYSVAAGEFTGDSQQELVAGIPRGAQNFGYVSIINSTDMTFIQNFTGEQMASYFGYTVVVSDVNSDGLDDVLVGAPLFMEREFESNPREVGQIYLYLQVSSLLFRDPQILTGTETFGRFGSAMAHLGDLNQDGYNDIAIGVPFAGKDQRGKVLIYNGNKDGLNTKPSQVLQGVWASHAVPSGFGFTLRGDSDIDKNDYPDLIVGAFGTGKVAVYRARPVVTVDAQLLLHPMIINLENKTCQVPDSMTSAACFSLRVCASVTGQSIANTIVLMAEVQLDSLKQKGAIKRTLFLDNHQAHRVFPLVIKRQKSHQCQDFIVYLRDETEFRDKLSPINISLNYSLDESTFKEGLEVKPILNYYRENIVSEQAHILVDCGEDNLCVPDLKLSARPDKHQVIIGDENHLMLIINARNEGEGAYEAELFVMIPEEADYVGIERNNKGFRPLSCEYKMENVTRMVVCDLGNPMVSGTNYSLGLRFAVPRLEKTNMSINFDLQIRSSNKDNPDSNFVSLQINITAVAQVEIRGVSHPPQIVLPIHNWEPEEEPHKEEEVGPLVEHIYELHNIGPSTISDTILEVGWPFSARDEFLLYIFHIQTLGPLQCQPNPNINPQDIKPAASPEDTPELSAFLRNSTIPHLVRKRDVHVVEFHRQSPAKILNCTNIECLQISCAVGRLEGGESAVLKVRSRLWAHTFLQRKNDPYALASLVSFEVKKMPYTDQPAKLPEGSIVIKTSVIWATPNVSFSIPLWVIILAILLGLLVLAILTLALWKCGFFDRARPPQEDMTDREQLTNDKTPEA.

An N-terminal signal peptide occupies residues 1-38 (MSPGASRGPRGSQAPLIAPLCCAAAALGMLLWSPACQA). Topologically, residues 39-1012 (FNLDVEKLTV…TPNVSFSIPL (974 aa)) are extracellular. FG-GAP repeat units lie at residues 44–105 (EKLT…GSAQ), 122–183 (NGTK…AYAE), 188–240 (RNSN…IANY), 253–306 (KQTE…STDM), 307–372 (TFIQ…LLFR), 373–431 (DPQI…GLNT), and 435–498 (QVLQ…LHPM). Asparagine 81 carries N-linked (GlcNAc...) asparagine glycosylation. A disulfide bond links cysteine 96 and cysteine 106. Asparagine 122 is a glycosylation site (N-linked (GlcNAc...) asparagine). A disulfide bridge links cysteine 150 with cysteine 171. Asparagine 177 is a glycosylation site (N-linked (GlcNAc...) asparagine). A disulfide bond links cysteine 187 and cysteine 200. Asparagine 239 is a glycosylation site (N-linked (GlcNAc...) asparagine). Residues glutamate 275, threonine 277, aspartate 279, and glutamate 283 each contribute to the Ca(2+) site. N-linked (GlcNAc...) asparagine glycosylation is found at asparagine 302 and asparagine 311. Positions 329, 331, 333, 335, 337, 395, 397, 399, 401, and 403 each coordinate Ca(2+). The Cell attachment site signature appears at 455–457 (RGD). Ca(2+) contacts are provided by aspartate 459, aspartate 461, asparagine 463, tyrosine 465, and aspartate 467. Residue asparagine 504 is glycosylated (N-linked (GlcNAc...) asparagine). 2 disulfides stabilise this stretch: cysteine 507-cysteine 518 and cysteine 524-cysteine 580. N-linked (GlcNAc...) asparagine glycans are attached at residues asparagine 601 and asparagine 605. 2 disulfides stabilise this stretch: cysteine 641/cysteine 647 and cysteine 713/cysteine 726. 6 N-linked (GlcNAc...) asparagine glycosylation sites follow: asparagine 719, asparagine 737, asparagine 753, asparagine 780, asparagine 896, and asparagine 923. 2 disulfide bridges follow: cysteine 867–cysteine 924 and cysteine 929–cysteine 934. A glycan (N-linked (GlcNAc...) asparagine) is linked at asparagine 1005. Residues 1013–1033 (WVIILAILLGLLVLAILTLAL) form a helical membrane-spanning segment. Over 1034–1063 (WKCGFFDRARPPQEDMTDREQLTNDKTPEA) the chain is Cytoplasmic.

It belongs to the integrin alpha chain family. Heterodimer of an alpha and a beta subunit. The alpha subunit is composed of a heavy and a light chain linked by a disulfide bond. Alpha-8 associates with beta-1. As to expression, expressed in mesenchymal cells, including alveolar myofibroblasts, kidney mesangial cells and hepatic stellar cells and vascular and visceral smooth muscle (at protein level).

Its subcellular location is the membrane. The protein resides in the cell membrane. Functionally, integrin alpha-8/beta-1 functions in the genesis of kidney and probably of other organs by regulating the recruitment of mesenchymal cells into epithelial structures. It recognizes the sequence R-G-D in a wide array of ligands including TNC, FN1, SPP1 TGFB1, TGFB3 and VTN. NPNT is probably its functional ligand in kidney genesis. Neuronal receptor for TNC it mediates cell-cell interactions and regulates neurite outgrowth of sensory and motor neurons. The protein is Integrin alpha-8 (ITGA8) of Homo sapiens (Human).